We begin with the raw amino-acid sequence, 118 residues long: DNA-binding protein Msm_0708 (118 aa).

The disordered stretch occupies residues 16–39; the sequence is EARQAAAQGQMQQQAQQQMQQQEA. Positions 18–39 are enriched in low complexity; it reads RQAAAQGQMQQQAQQQMQQQEA.

Belongs to the PDCD5 family.

The protein is DNA-binding protein Msm_0708 of Methanobrevibacter smithii (strain ATCC 35061 / DSM 861 / OCM 144 / PS).